A 391-amino-acid chain; its full sequence is Ribonucleoside-diphosphate reductase small chain (391 aa).

Fe cation contacts are provided by D135, E166, and H169. The active site involves Y173. Fe cation-binding residues include E229, E263, and H266.

It belongs to the ribonucleoside diphosphate reductase small chain family. As to quaternary structure, heterodimer of a large and a small subunit. The cofactor is Fe cation.

Its subcellular location is the nucleus. The protein resides in the cytoplasm. The enzyme catalyses a 2'-deoxyribonucleoside 5'-diphosphate + [thioredoxin]-disulfide + H2O = a ribonucleoside 5'-diphosphate + [thioredoxin]-dithiol. Its function is as follows. Provides the precursors necessary for DNA synthesis. Catalyzes the biosynthesis of deoxyribonucleotides from the corresponding ribonucleotides. The chain is Ribonucleoside-diphosphate reductase small chain (suc22) from Schizosaccharomyces pombe (strain 972 / ATCC 24843) (Fission yeast).